Here is a 111-residue protein sequence, read N- to C-terminus: Ig kappa chain V-III region PC 7769 (111 aa).

Positions 1–23 (DIVLTQSPASLAVSLGQRATISC) are framework-1. A disulfide bridge links cysteine 23 with cysteine 92. The complementarity-determining-1 stretch occupies residues 24–38 (KASQSVDYDGDSYMN). The framework-2 stretch occupies residues 39–53 (WYQQKPGQPPKVLIF). Residues 54–60 (AASNLES) form a complementarity-determining-2 region. The segment at 61–92 (GIPARFSGSGSGTDFTLNIHPVEEEDAATYYC) is framework-3. The segment at 93 to 101 (QQSNEDPWT) is complementarity-determining-3. The interval 102–111 (FGSGTKLEIK) is framework-4.

The chain is Ig kappa chain V-III region PC 7769 from Mus musculus (Mouse).